The chain runs to 121 residues: Small ribosomal subunit protein uS13 (121 aa).

The interval 92 to 121 (RKGLPMRGQRTRTNARTRKGPRRAAQALKK) is disordered.

Belongs to the universal ribosomal protein uS13 family. As to quaternary structure, part of the 30S ribosomal subunit. Forms a loose heterodimer with protein S19. Forms two bridges to the 50S subunit in the 70S ribosome.

Its function is as follows. Located at the top of the head of the 30S subunit, it contacts several helices of the 16S rRNA. In the 70S ribosome it contacts the 23S rRNA (bridge B1a) and protein L5 of the 50S subunit (bridge B1b), connecting the 2 subunits; these bridges are implicated in subunit movement. Contacts the tRNAs in the A and P-sites. The chain is Small ribosomal subunit protein uS13 from Burkholderia cenocepacia (strain HI2424).